The primary structure comprises 329 residues: GTP 3',8-cyclase (329 aa).

The 227-residue stretch at 8–234 (VFARKFYYLR…QLRQRSDGPA (227 aa)) folds into the Radical SAM core domain. Residue arginine 17 coordinates GTP. Residues cysteine 24 and cysteine 28 each contribute to the [4Fe-4S] cluster site. Tyrosine 30 serves as a coordination point for S-adenosyl-L-methionine. Residue cysteine 31 coordinates [4Fe-4S] cluster. Arginine 68 is a binding site for GTP. Position 72 (glycine 72) interacts with S-adenosyl-L-methionine. Threonine 99 lines the GTP pocket. Serine 123 is a binding site for S-adenosyl-L-methionine. Lysine 160 contacts GTP. S-adenosyl-L-methionine is bound at residue methionine 194. Residues cysteine 257 and cysteine 260 each coordinate [4Fe-4S] cluster. Position 262-264 (262-264 (RLR)) interacts with GTP. Cysteine 274 is a binding site for [4Fe-4S] cluster.

It belongs to the radical SAM superfamily. MoaA family. As to quaternary structure, monomer and homodimer. [4Fe-4S] cluster serves as cofactor.

It carries out the reaction GTP + AH2 + S-adenosyl-L-methionine = (8S)-3',8-cyclo-7,8-dihydroguanosine 5'-triphosphate + 5'-deoxyadenosine + L-methionine + A + H(+). The protein operates within cofactor biosynthesis; molybdopterin biosynthesis. In terms of biological role, catalyzes the cyclization of GTP to (8S)-3',8-cyclo-7,8-dihydroguanosine 5'-triphosphate. This Shigella flexneri protein is GTP 3',8-cyclase.